Reading from the N-terminus, the 251-residue chain is Dihydroorotate dehydrogenase B (NAD(+)), electron transfer subunit homolog (251 aa).

Residues 2-101 (LAELNAEVLE…FLPLGKRLFS (100 aa)) form the FAD-binding FR-type domain. Residues Cys217, Cys222, Cys225, and Cys238 each contribute to the [2Fe-2S] cluster site.

This sequence belongs to the PyrK family. The cofactor is [2Fe-2S] cluster. It depends on FAD as a cofactor.

This chain is Dihydroorotate dehydrogenase B (NAD(+)), electron transfer subunit homolog, found in Aquifex aeolicus (strain VF5).